We begin with the raw amino-acid sequence, 81 residues long: Photosystem I iron-sulfur center (81 aa).

2 consecutive 4Fe-4S ferredoxin-type domains span residues 2 to 31 (SHTV…MAPW) and 39 to 68 (VASA…VRVY). [4Fe-4S] cluster-binding residues include Cys11, Cys14, Cys17, Cys21, Cys48, Cys51, Cys54, and Cys58.

The eukaryotic PSI reaction center is composed of at least 11 subunits. Requires [4Fe-4S] cluster as cofactor.

It localises to the plastid. Its subcellular location is the chloroplast thylakoid membrane. The catalysed reaction is reduced [plastocyanin] + hnu + oxidized [2Fe-2S]-[ferredoxin] = oxidized [plastocyanin] + reduced [2Fe-2S]-[ferredoxin]. Its function is as follows. Apoprotein for the two 4Fe-4S centers FA and FB of photosystem I (PSI); essential for photochemical activity. FB is the terminal electron acceptor of PSI, donating electrons to ferredoxin. The C-terminus interacts with PsaA/B/D and helps assemble the protein into the PSI complex. Required for binding of PsaD and PsaE to PSI. PSI is a plastocyanin/cytochrome c6-ferredoxin oxidoreductase, converting photonic excitation into a charge separation, which transfers an electron from the donor P700 chlorophyll pair to the spectroscopically characterized acceptors A0, A1, FX, FA and FB in turn. The chain is Photosystem I iron-sulfur center from Tupiella akineta (Green alga).